Reading from the N-terminus, the 430-residue chain is Glutamate-1-semialdehyde 2,1-aminomutase (430 aa).

K267 carries the post-translational modification N6-(pyridoxal phosphate)lysine.

It belongs to the class-III pyridoxal-phosphate-dependent aminotransferase family. HemL subfamily. Homodimer. It depends on pyridoxal 5'-phosphate as a cofactor.

It is found in the cytoplasm. The enzyme catalyses (S)-4-amino-5-oxopentanoate = 5-aminolevulinate. It participates in porphyrin-containing compound metabolism; protoporphyrin-IX biosynthesis; 5-aminolevulinate from L-glutamyl-tRNA(Glu): step 2/2. This Anaeromyxobacter dehalogenans (strain 2CP-C) protein is Glutamate-1-semialdehyde 2,1-aminomutase.